Reading from the N-terminus, the 190-residue chain is Large ribosomal subunit protein bL25 (190 aa).

Belongs to the bacterial ribosomal protein bL25 family. CTC subfamily. In terms of assembly, part of the 50S ribosomal subunit; part of the 5S rRNA/L5/L18/L25 subcomplex. Contacts the 5S rRNA. Binds to the 5S rRNA independently of L5 and L18.

In terms of biological role, this is one of the proteins that binds to the 5S RNA in the ribosome where it forms part of the central protuberance. The chain is Large ribosomal subunit protein bL25 from Neisseria gonorrhoeae (strain ATCC 700825 / FA 1090).